Here is a 520-residue protein sequence, read N- to C-terminus: Bifunctional purine biosynthesis protein PurH (520 aa).

The MGS-like domain maps to 1-147; it reads MAKIGRALIS…KNNRDVTVVV (147 aa).

This sequence belongs to the PurH family.

The catalysed reaction is (6R)-10-formyltetrahydrofolate + 5-amino-1-(5-phospho-beta-D-ribosyl)imidazole-4-carboxamide = 5-formamido-1-(5-phospho-D-ribosyl)imidazole-4-carboxamide + (6S)-5,6,7,8-tetrahydrofolate. It carries out the reaction IMP + H2O = 5-formamido-1-(5-phospho-D-ribosyl)imidazole-4-carboxamide. Its pathway is purine metabolism; IMP biosynthesis via de novo pathway; 5-formamido-1-(5-phospho-D-ribosyl)imidazole-4-carboxamide from 5-amino-1-(5-phospho-D-ribosyl)imidazole-4-carboxamide (10-formyl THF route): step 1/1. The protein operates within purine metabolism; IMP biosynthesis via de novo pathway; IMP from 5-formamido-1-(5-phospho-D-ribosyl)imidazole-4-carboxamide: step 1/1. In Citrifermentans bemidjiense (strain ATCC BAA-1014 / DSM 16622 / JCM 12645 / Bem) (Geobacter bemidjiensis), this protein is Bifunctional purine biosynthesis protein PurH.